A 361-amino-acid polypeptide reads, in one-letter code: tRNA-specific 2-thiouridylase MnmA (361 aa).

Residues 11–18 (GMSGGVDS) and Met-37 contribute to the ATP site. Catalysis depends on Cys-106, which acts as the Nucleophile. Cys-106 and Cys-202 form a disulfide bridge. Gly-130 contacts ATP. The tract at residues 152-154 (KDQ) is interaction with tRNA. Cys-202 acts as the Cysteine persulfide intermediate in catalysis. The tract at residues 308–309 (RY) is interaction with tRNA.

It belongs to the MnmA/TRMU family.

The protein localises to the cytoplasm. The catalysed reaction is S-sulfanyl-L-cysteinyl-[protein] + uridine(34) in tRNA + AH2 + ATP = 2-thiouridine(34) in tRNA + L-cysteinyl-[protein] + A + AMP + diphosphate + H(+). Its function is as follows. Catalyzes the 2-thiolation of uridine at the wobble position (U34) of tRNA, leading to the formation of s(2)U34. The protein is tRNA-specific 2-thiouridylase MnmA of Clostridium botulinum (strain Eklund 17B / Type B).